We begin with the raw amino-acid sequence, 207 residues long: Ribonuclease HII (207 aa).

Residues 12–201 (DLVAGVDEVG…VRAAWEAREG (190 aa)) enclose the RNase H type-2 domain. A divalent metal cation contacts are provided by Asp-18, Glu-19, and Asp-110.

It belongs to the RNase HII family. Mn(2+) serves as cofactor. Requires Mg(2+) as cofactor.

The protein resides in the cytoplasm. The enzyme catalyses Endonucleolytic cleavage to 5'-phosphomonoester.. In terms of biological role, endonuclease that specifically degrades the RNA of RNA-DNA hybrids. The chain is Ribonuclease HII from Pseudomonas putida (strain ATCC 47054 / DSM 6125 / CFBP 8728 / NCIMB 11950 / KT2440).